The following is a 340-amino-acid chain: 4-hydroxythreonine-4-phosphate dehydrogenase (340 aa).

The substrate site is built by H141 and T142. Positions 177, 222, and 277 each coordinate a divalent metal cation. The substrate site is built by K285, N294, and R303.

Belongs to the PdxA family. As to quaternary structure, homodimer. The cofactor is Zn(2+). Requires Mg(2+) as cofactor. It depends on Co(2+) as a cofactor.

It is found in the cytoplasm. The enzyme catalyses 4-(phosphooxy)-L-threonine + NAD(+) = 3-amino-2-oxopropyl phosphate + CO2 + NADH. Its pathway is cofactor biosynthesis; pyridoxine 5'-phosphate biosynthesis; pyridoxine 5'-phosphate from D-erythrose 4-phosphate: step 4/5. Functionally, catalyzes the NAD(P)-dependent oxidation of 4-(phosphooxy)-L-threonine (HTP) into 2-amino-3-oxo-4-(phosphooxy)butyric acid which spontaneously decarboxylates to form 3-amino-2-oxopropyl phosphate (AHAP). The sequence is that of 4-hydroxythreonine-4-phosphate dehydrogenase from Maricaulis maris (strain MCS10) (Caulobacter maris).